A 251-amino-acid chain; its full sequence is Small ribosomal subunit protein uS2 (251 aa).

This sequence belongs to the universal ribosomal protein uS2 family.

The protein is Small ribosomal subunit protein uS2 (rpsB) of Arthrospira platensis (Spirulina platensis).